Here is a 136-residue protein sequence, read N- to C-terminus: Small ribosomal subunit protein uS9 (136 aa).

Residues 111 to 136 (DARRTEPHKPSRSTKGPRAKRQKSYR) are disordered. The segment covering 120–136 (PSRSTKGPRAKRQKSYR) has biased composition (basic residues).

This sequence belongs to the universal ribosomal protein uS9 family.

This Methanocaldococcus jannaschii (strain ATCC 43067 / DSM 2661 / JAL-1 / JCM 10045 / NBRC 100440) (Methanococcus jannaschii) protein is Small ribosomal subunit protein uS9 (rps9).